Consider the following 496-residue polypeptide: MSHQHTEELNDQQIVRREKMEALTEQGIDPFGKRFERTATSGQLKEKYADKTKEELHDINETATIAGRLMTKRGKGKVGFAHLQDREGQIQIYVRKDTVGDDNYQIFKKADIGDFLGVEGEIMRTDMGELSIKATHITHLSKALRPLPEKFHGLTDVETIYRKRYLDLISNRESLERFITRSKIISEIRRYLDGLGFLEVETPVLHNEAGGAAAKPFTTHHNAQDMDMVLRIATELHLKRLIVGGMERVYEMGRIFRNEGMDATHNPEFTSIEVYQAYADFEDIMDLTEGIVQHAATAVKGDGPITYQGTEIKINEPFKRAHIVDLIKEVTGVDFWKEMTLAEAQALAQEKNVPLEKHYTSVGHIINAFFEEFVEETLIQPIFVYGHPVEVSPLAKKNADDPRFTDRFELFIMTKEYGNAFTELNDPIDQLERFKAQAAAKELGDDEATGIDYDYVEALEYGMPPTGGLGIGIDRLVMLLTDTTTIRDVLLFPTMK.

2 residues coordinate Mg(2+): Glu409 and Glu416.

Belongs to the class-II aminoacyl-tRNA synthetase family. As to quaternary structure, homodimer. Mg(2+) serves as cofactor.

Its subcellular location is the cytoplasm. The catalysed reaction is tRNA(Lys) + L-lysine + ATP = L-lysyl-tRNA(Lys) + AMP + diphosphate. The protein is Lysine--tRNA ligase of Streptococcus mutans serotype c (strain ATCC 700610 / UA159).